The chain runs to 672 residues: DNA ligase (672 aa).

NAD(+) is bound by residues 32–36 (DEKYD), 82–83 (SL), and Glu-113. Residue Lys-115 is the N6-AMP-lysine intermediate of the active site. Residues Arg-136, Glu-173, Lys-290, and Lys-314 each contribute to the NAD(+) site. Residues Cys-408, Cys-411, Cys-427, and Cys-433 each contribute to the Zn(2+) site. The BRCT domain occupies 592–672 (DNNNTLFRKK…EFLNIINVYL (81 aa)).

The protein belongs to the NAD-dependent DNA ligase family. LigA subfamily. Requires Mg(2+) as cofactor. It depends on Mn(2+) as a cofactor.

It catalyses the reaction NAD(+) + (deoxyribonucleotide)n-3'-hydroxyl + 5'-phospho-(deoxyribonucleotide)m = (deoxyribonucleotide)n+m + AMP + beta-nicotinamide D-nucleotide.. Functionally, DNA ligase that catalyzes the formation of phosphodiester linkages between 5'-phosphoryl and 3'-hydroxyl groups in double-stranded DNA using NAD as a coenzyme and as the energy source for the reaction. It is essential for DNA replication and repair of damaged DNA. This Buchnera aphidicola subsp. Baizongia pistaciae (strain Bp) protein is DNA ligase.